A 238-amino-acid polypeptide reads, in one-letter code: Riboflavin-binding protein (238 aa).

An N-terminal signal peptide occupies residues 1 to 17 (MLRFAITLFAVITSSTC). Q18 carries the post-translational modification Pyrrolidone carboxylic acid. 9 disulfide bridges follow: C22-C49, C41-C90, C50-C94, C74-C155, C81-C127, C116-C186, C120-C169, C133-C151, and C184-C219. Residue N53 is glycosylated (N-linked (GlcNAc...) asparagine). N164 carries N-linked (GlcNAc...) asparagine glycosylation. 8 positions are modified to phosphoserine: S204, S205, S208, S209, S210, S212, S213, and S214.

This sequence belongs to the folate receptor family. Plasma and yolk RBPS have the same carbohydrate components, whereas egg-white RBP has a different, ovomucoid-type carbohydrate chain. Post-translationally, plasma RBP has the same C-terminal sequence as the egg-white RBP, which suggests that the C-terminal residues are cleaved off upon incorporation into the oocyte. As to expression, yolk RBP is synthesized in the liver; egg-white RBP is synthesized in the oviduct.

Functionally, required for the transport of riboflavin to the developing oocyte. This is Riboflavin-binding protein from Gallus gallus (Chicken).